The following is a 248-amino-acid chain: Probable septum site-determining protein MinC (248 aa).

The disordered stretch occupies residues 115–144 (PTAVSPPPPPPPPARAEPAPPAARPAPGRM). Residues 118 to 138 (VSPPPPPPPPARAEPAPPAAR) are compositionally biased toward pro residues.

Belongs to the MinC family. As to quaternary structure, interacts with MinD and FtsZ.

Its function is as follows. Cell division inhibitor that blocks the formation of polar Z ring septums. Rapidly oscillates between the poles of the cell to destabilize FtsZ filaments that have formed before they mature into polar Z rings. Prevents FtsZ polymerization. This Xanthomonas euvesicatoria pv. vesicatoria (strain 85-10) (Xanthomonas campestris pv. vesicatoria) protein is Probable septum site-determining protein MinC.